A 263-amino-acid chain; its full sequence is 1-(5-phosphoribosyl)-5-[(5-phosphoribosylamino)methylideneamino] imidazole-4-carboxamide isomerase (263 aa).

Belongs to the HisA/HisF family.

It localises to the cytoplasm. It carries out the reaction 1-(5-phospho-beta-D-ribosyl)-5-[(5-phospho-beta-D-ribosylamino)methylideneamino]imidazole-4-carboxamide = 5-[(5-phospho-1-deoxy-D-ribulos-1-ylimino)methylamino]-1-(5-phospho-beta-D-ribosyl)imidazole-4-carboxamide. It functions in the pathway amino-acid biosynthesis; L-histidine biosynthesis; L-histidine from 5-phospho-alpha-D-ribose 1-diphosphate: step 4/9. This Eremothecium gossypii (strain ATCC 10895 / CBS 109.51 / FGSC 9923 / NRRL Y-1056) (Yeast) protein is 1-(5-phosphoribosyl)-5-[(5-phosphoribosylamino)methylideneamino] imidazole-4-carboxamide isomerase (HIS6).